We begin with the raw amino-acid sequence, 351 residues long: MNVKEHVISLPRRVFVGHDIIYDISIYFSQLGITSPFLIVTGTKYTKKIADRVIENLPKNAKYEVIEIDTATLDDVYKVEEVVKKVNPNILLGIGGGKVIDVTKYAAFRNNLEFVSIPTSPSHDGITSPFASIKGLQKPVSVKAKEPLAIIVDIEILSLSPRRLINAGIGDTIGKIIAVRDWRLAAKLRGEYYGDYTASLALMSAKHAFQCTKIINKDIKYGVRMLIEALISSGVAMGMAGSTRPASGSEHLFAHAVELLHPEGVLHGELVGLGTIIMAYLHGINWKIIRDRLKKIGFPVKAKDLGLSDEEVIKALTIAHTIRPERYTILGDRGLTWSSAEKIARVTKIID.

Residues 97 to 101 and 119 to 122 contribute to the NAD(+) site; these read GKVID and TSPS. Residue D124 coordinates substrate. NAD(+) is bound at residue S128. D171 contacts substrate. 2 residues coordinate Zn(2+): D171 and H251. Residue H255 coordinates substrate. H267 provides a ligand contact to Zn(2+).

This sequence belongs to the glycerol-1-phosphate dehydrogenase family. As to quaternary structure, homodimer. The cofactor is Zn(2+).

Its subcellular location is the cytoplasm. It carries out the reaction sn-glycerol 1-phosphate + NAD(+) = dihydroxyacetone phosphate + NADH + H(+). The enzyme catalyses sn-glycerol 1-phosphate + NADP(+) = dihydroxyacetone phosphate + NADPH + H(+). The protein operates within membrane lipid metabolism; glycerophospholipid metabolism. Catalyzes the NAD(P)H-dependent reduction of dihydroxyacetonephosphate (DHAP or glycerone phosphate) to glycerol 1-phosphate (G1P). The G1P thus generated is used as the glycerophosphate backbone of phospholipids in the cellular membranes of Archaea. This Saccharolobus islandicus (strain L.S.2.15 / Lassen #1) (Sulfolobus islandicus) protein is Glycerol-1-phosphate dehydrogenase [NAD(P)+].